The following is a 929-amino-acid chain: Patatin-like phospholipase domain-containing protein CNE02340 (929 aa).

The interval 37–85 (QPLDGDSSPLSPRSFSLPPESPQLSTASVKAPPPTWKYGPDNGTLRSGR) is disordered. The segment covering 43–54 (SSPLSPRSFSLP) has biased composition (low complexity). A helical transmembrane segment spans residues 126–146 (WPLLFFIFFIIYLEFSAYVIT). The PNPLA domain occupies 301-493 (LCLSGGASFG…REDIPLGSLH (193 aa)). Positions 332 to 336 (GTSAG) match the GXSXG motif. Catalysis depends on serine 334, which acts as the Nucleophile. Aspartate 480 acts as the Proton acceptor in catalysis. Disordered regions lie at residues 644 to 765 (ALSH…NFGD), 778 to 806 (LSSPFRSIRSNTSSSSNNVQSPSSSQRFR), and 818 to 929 (VSES…QDGA). Polar residues-rich tracts occupy residues 652 to 664 (NDPATSLPETNPE) and 745 to 764 (PTHSPIATESPQRNYTSNFG). A compositionally biased stretch (low complexity) spans 779 to 806 (SSPFRSIRSNTSSSSNNVQSPSSSQRFR). Basic and acidic residues predominate over residues 856–878 (VESHSDRSEDEMLHSGANVKEEY).

Belongs to the PLPL family.

Its subcellular location is the membrane. Probable lipid hydrolase. This is Patatin-like phospholipase domain-containing protein CNE02340 from Cryptococcus neoformans var. neoformans serotype D (strain JEC21 / ATCC MYA-565) (Filobasidiella neoformans).